Here is a 385-residue protein sequence, read N- to C-terminus: 3-hydroxyisobutyryl-CoA hydrolase, mitochondrial (385 aa).

A mitochondrion-targeting transit peptide spans 1–32 (MGQPYAWRLLSRVSSFRRASVILQHLRMSMHT). 3 positions are modified to N6-acetyllysine; alternate: K54, K91, and K100. Residues K54, K91, and K100 each carry the N6-succinyllysine; alternate modification. 4 residues coordinate substrate: E120, G145, E168, and D176. The residue at position 220 (K220) is an N6-acetyllysine; alternate. At K220 the chain carries N6-succinyllysine; alternate. Position 233 is a phosphoserine (S233). K249 and K256 each carry N6-succinyllysine. K296 is subject to N6-acetyllysine; alternate. Position 296 is an N6-succinyllysine; alternate (K296). K300 bears the N6-succinyllysine mark. K352 is modified (N6-acetyllysine; alternate). At K352 the chain carries N6-succinyllysine; alternate. An N6-acetyllysine mark is found at K359 and K364. An N6-succinyllysine modification is found at K376.

Belongs to the enoyl-CoA hydratase/isomerase family.

Its subcellular location is the mitochondrion. The enzyme catalyses 3-hydroxy-2-methylpropanoyl-CoA + H2O = 3-hydroxy-2-methylpropanoate + CoA + H(+). Its pathway is amino-acid degradation; L-valine degradation. In terms of biological role, hydrolyzes 3-hydroxyisobutyryl-CoA (HIBYL-CoA), a saline catabolite. Has high activity toward isobutyryl-CoA. Could be an isobutyryl-CoA dehydrogenase that functions in valine catabolism. Also hydrolyzes 3-hydroxypropanoyl-CoA. The sequence is that of 3-hydroxyisobutyryl-CoA hydrolase, mitochondrial (Hibch) from Mus musculus (Mouse).